The primary structure comprises 650 residues: ATP-dependent zinc metalloprotease FtsH (650 aa).

Topologically, residues 1-10 are cytoplasmic; sequence MKTKKSKSTL. A helical transmembrane segment spans residues 11–31; the sequence is WFWLIILLAIIVTIIIIAVTV. Topologically, residues 32–123 are extracellular; it reads KGTTQVISDA…LVYQGSVGMA (92 aa). Residues 124-144 form a helical membrane-spanning segment; that stretch reads LLVSLAPLLIYVLLFGGIIWF. Topologically, residues 145–650 are cytoplasmic; sequence MMKSSSGAGA…DIKVEDLDID (506 aa). 217 to 224 contacts ATP; the sequence is GPPGTGKT. H437 is a Zn(2+) binding site. E438 is an active-site residue. Residues H441 and D515 each contribute to the Zn(2+) site.

In the central section; belongs to the AAA ATPase family. The protein in the C-terminal section; belongs to the peptidase M41 family. As to quaternary structure, homohexamer. It depends on Zn(2+) as a cofactor.

The protein localises to the cell membrane. In terms of biological role, acts as a processive, ATP-dependent zinc metallopeptidase for both cytoplasmic and membrane proteins. Plays a role in the quality control of integral membrane proteins. The chain is ATP-dependent zinc metalloprotease FtsH from Mesoplasma florum (strain ATCC 33453 / NBRC 100688 / NCTC 11704 / L1) (Acholeplasma florum).